Consider the following 1033-residue polypeptide: DNA polymerase I A, chloroplastic (1033 aa).

Over residues Met1 to Pro11 the composition is skewed to pro residues. Disordered stretches follow at residues Met1 to Pro32 and Thr104 to Ser142. Residues Met1–Ser55 constitute a chloroplast transit peptide. Positions Leu115–Arg124 are enriched in basic and acidic residues. Residues Ser125–Ser142 are compositionally biased toward polar residues. The region spanning Phe321–Glu482 is the 3'-5' exonuclease domain. The interval Cys696 to Tyr1030 is polymerase.

This sequence belongs to the DNA polymerase type-A family. As to expression, expressed in shoot apical meristem, root apical meristem, leaf primordia and the marginal meristem.

The protein resides in the plastid. It localises to the chloroplast. The enzyme catalyses DNA(n) + a 2'-deoxyribonucleoside 5'-triphosphate = DNA(n+1) + diphosphate. Its activity is regulated as follows. Inhibited by dideoxythymidine-triphosphate (ddTTP), but not by aphidicolin and N-ethylmaleimide. Functionally, in addition to polymerase activity, this DNA polymerase exhibits 5'-3' exonuclease activity. May be required for DNA replication and accumulation in plastids. The sequence is that of DNA polymerase I A, chloroplastic from Oryza sativa subsp. japonica (Rice).